The primary structure comprises 486 residues: Glutamyl-tRNA(Gln) amidotransferase subunit A (486 aa).

Residues lysine 79 and serine 154 each act as charge relay system in the active site. The active-site Acyl-ester intermediate is serine 178.

It belongs to the amidase family. GatA subfamily. Heterotrimer of A, B and C subunits.

The catalysed reaction is L-glutamyl-tRNA(Gln) + L-glutamine + ATP + H2O = L-glutaminyl-tRNA(Gln) + L-glutamate + ADP + phosphate + H(+). In terms of biological role, allows the formation of correctly charged Gln-tRNA(Gln) through the transamidation of misacylated Glu-tRNA(Gln) in organisms which lack glutaminyl-tRNA synthetase. The reaction takes place in the presence of glutamine and ATP through an activated gamma-phospho-Glu-tRNA(Gln). The polypeptide is Glutamyl-tRNA(Gln) amidotransferase subunit A (Dehalococcoides mccartyi (strain CBDB1)).